A 223-amino-acid polypeptide reads, in one-letter code: Peptidyl-prolyl cis-trans isomerase, mitochondrial (223 aa).

Residues 1 to 44 (MFGPRHFSVLKTTGSLVSSTFSSSLKPTATFSCARAFSQTSSIM) constitute a mitochondrion transit peptide. The PPIase cyclophilin-type domain maps to 62–222 (NKPTSEIKAQ…KKPTIVDCGA (161 aa)).

Belongs to the cyclophilin-type PPIase family.

The protein localises to the mitochondrion. The protein resides in the cytoplasm. It carries out the reaction [protein]-peptidylproline (omega=180) = [protein]-peptidylproline (omega=0). Binds cyclosporin A (CsA). CsA mediates some of its effects via an inhibitory action on PPIase. In terms of biological role, PPIases accelerate the folding of proteins. It catalyzes the cis-trans isomerization of proline imidic peptide bonds in oligopeptides. This Neurospora crassa (strain ATCC 24698 / 74-OR23-1A / CBS 708.71 / DSM 1257 / FGSC 987) protein is Peptidyl-prolyl cis-trans isomerase, mitochondrial (csr-1).